Reading from the N-terminus, the 209-residue chain is Uridine kinase (209 aa).

Residue 12–19 (GGSGSGKT) participates in ATP binding.

Belongs to the uridine kinase family.

It is found in the cytoplasm. It carries out the reaction uridine + ATP = UMP + ADP + H(+). The catalysed reaction is cytidine + ATP = CMP + ADP + H(+). Its pathway is pyrimidine metabolism; CTP biosynthesis via salvage pathway; CTP from cytidine: step 1/3. The protein operates within pyrimidine metabolism; UMP biosynthesis via salvage pathway; UMP from uridine: step 1/1. In Listeria monocytogenes serotype 4b (strain CLIP80459), this protein is Uridine kinase.